A 376-amino-acid polypeptide reads, in one-letter code: Chaperone protein DnaJ (376 aa).

One can recognise a J domain in the interval 5–70 (DFYEVLGVER…SKRAAYDQYG (66 aa)). The CR-type zinc finger occupies 135-213 (GTTVTIRVPT…CHGQGRVEEQ (79 aa)). Zn(2+)-binding residues include C148, C151, C165, C168, C187, C190, C201, and C204. CXXCXGXG motif repeat units follow at residues 148-155 (CKTCDGSG), 165-172 (CTTCGGIG), 187-194 (CPRCHGSG), and 201-208 (CGSCHGQG).

The protein belongs to the DnaJ family. In terms of assembly, homodimer. Requires Zn(2+) as cofactor.

Its subcellular location is the cytoplasm. Participates actively in the response to hyperosmotic and heat shock by preventing the aggregation of stress-denatured proteins and by disaggregating proteins, also in an autonomous, DnaK-independent fashion. Unfolded proteins bind initially to DnaJ; upon interaction with the DnaJ-bound protein, DnaK hydrolyzes its bound ATP, resulting in the formation of a stable complex. GrpE releases ADP from DnaK; ATP binding to DnaK triggers the release of the substrate protein, thus completing the reaction cycle. Several rounds of ATP-dependent interactions between DnaJ, DnaK and GrpE are required for fully efficient folding. Also involved, together with DnaK and GrpE, in the DNA replication of plasmids through activation of initiation proteins. The chain is Chaperone protein DnaJ from Stutzerimonas stutzeri (Pseudomonas stutzeri).